Reading from the N-terminus, the 396-residue chain is Succinyl-diaminopimelate desuccinylase (396 aa).

His-74 is a binding site for Zn(2+). Asp-76 is a catalytic residue. Asp-107 is a Zn(2+) binding site. Catalysis depends on Glu-142, which acts as the Proton acceptor. Residues Glu-143, Glu-171, and His-360 each coordinate Zn(2+).

It belongs to the peptidase M20A family. DapE subfamily. Homodimer. Requires Zn(2+) as cofactor. It depends on Co(2+) as a cofactor.

It catalyses the reaction N-succinyl-(2S,6S)-2,6-diaminopimelate + H2O = (2S,6S)-2,6-diaminopimelate + succinate. It participates in amino-acid biosynthesis; L-lysine biosynthesis via DAP pathway; LL-2,6-diaminopimelate from (S)-tetrahydrodipicolinate (succinylase route): step 3/3. Its function is as follows. Catalyzes the hydrolysis of N-succinyl-L,L-diaminopimelic acid (SDAP), forming succinate and LL-2,6-diaminopimelate (DAP), an intermediate involved in the bacterial biosynthesis of lysine and meso-diaminopimelic acid, an essential component of bacterial cell walls. The polypeptide is Succinyl-diaminopimelate desuccinylase (Methylobacterium nodulans (strain LMG 21967 / CNCM I-2342 / ORS 2060)).